A 501-amino-acid chain; its full sequence is MEFRLPVLLSFLLFFLMLVRHWKRSKGQGKPPPGPKPLPILGNLHQLADGLPHYAVTKLCRKYGPVMKLKLGQLDAVVISSPEAAKEVLKTNEIKFAQRPEVYAVEIMSYDHSSIVFSPYGDYWREMRKISVLELLSNRRVTSFRSIREDEVWNLVQFISENEGCIVNLSERIFIMTNDIVSRAAFGNKCDDQHNFTALLEEILQIGAGFAIADLYPSLTFLRPLTGMKPALERIHKKMDKILEQIVTEHQIKRKAAAKNNTKFEEEDLVDTLLNYAEANKNEFHLTTDQVKAVTLDIFSAGSETSATSMEWAMSELLKNPRVMKKAQEEVRQACKGKSKIKETDIQNLEYLKLVIKETFRLHAPGPFTPREARETCEIGGYTIPAKAKILINLHAMGRDPTIWKDPECFRPERFEGSSIDFKGNHFELIPFGGGRRICPGISFATANIELGLAQMMYHFDYKLPNGKSLEDLDMNENFGMTCRRKENLQVIATTRIPFQK.

Residues 1–21 (MEFRLPVLLSFLLFFLMLVRH) traverse the membrane as a helical segment. Residue cysteine 439 coordinates heme.

The protein belongs to the cytochrome P450 family. Heme is required as a cofactor. In terms of tissue distribution, mainly expressed in petioles and roots, and, to a lower extent, in leaves.

The protein localises to the membrane. The enzyme catalyses dihydroniloticin + 2 reduced [NADPH--hemoprotein reductase] + 2 O2 = melianol + 2 oxidized [NADPH--hemoprotein reductase] + 3 H2O + 2 H(+). The protein operates within secondary metabolite biosynthesis; terpenoid biosynthesis. Its function is as follows. Monooxygenase involved in the biosynthesis of limonoids triterpene natural products such as azadirachtin, an antifeedant widely used as bioinsecticide, and possessing many medicinal applications including anti-tumoral, anti-malarial, anti-rheumatic, antibacterial, anti-inflammatory, anti-pyretic and diuretic effects. Catalyzes the conversion of dihydroniloticin to the protolimonoid melianol. The protein is Melianol synthase CYP71BQ5 of Melia azedarach (Chinaberry tree).